Reading from the N-terminus, the 110-residue chain is MEQMKITNLTDEQISFQLILHSGNARSCIIQSLRAYKEGKKDEADALIAKAEQDLSAAHDIHFQMIQKESGGEATAFSLLLMHAEDHLMSTLSMKELVKEMLDLFKTKNI.

Residues 9 to 107 (LTDEQISFQL…VKEMLDLFKT (99 aa)) form the PTS EIIA type-3 domain. Catalysis depends on His83, which acts as the Tele-phosphohistidine intermediate. His83 carries the post-translational modification Phosphohistidine; by HPr.

The protein localises to the cytoplasm. Functionally, the phosphoenolpyruvate-dependent sugar phosphotransferase system (sugar PTS), a major carbohydrate active transport system, catalyzes the phosphorylation of incoming sugar substrates concomitantly with their translocation across the cell membrane. The enzyme II GmuABC PTS system is involved in the transport of oligo-glucomannans such as cellobiose or mannobiose. The sequence is that of PTS system oligo-beta-mannoside-specific EIIA component from Bacillus subtilis (strain 168).